A 508-amino-acid polypeptide reads, in one-letter code: GTPase Obg (508 aa).

Residues 2–159 enclose the Obg domain; the sequence is ARFVDRVVLH…HDVILELKSM (158 aa). The 182-residue stretch at 160–341 folds into the OBG-type G domain; sequence ADIGLVGFPS…LKYAMLDLVQ (182 aa). GTP is bound by residues 166–173, 191–195, 212–215, 292–295, and 322–324; these read GFPSAGKS, FTTLQ, DVPG, NKAD, and SAV. Ser173 and Thr193 together coordinate Mg(2+). Residues 364-444 enclose the OCT domain; that stretch reads DARKKNKDFE…IGEVSFEWEP (81 aa).

It belongs to the TRAFAC class OBG-HflX-like GTPase superfamily. OBG GTPase family. As to quaternary structure, monomer. It depends on Mg(2+) as a cofactor.

The protein localises to the cytoplasm. In terms of biological role, an essential GTPase which binds GTP, GDP and possibly (p)ppGpp with moderate affinity, with high nucleotide exchange rates and a fairly low GTP hydrolysis rate. Plays a role in control of the cell cycle, stress response, ribosome biogenesis and in those bacteria that undergo differentiation, in morphogenesis control. The polypeptide is GTPase Obg (Corynebacterium diphtheriae (strain ATCC 700971 / NCTC 13129 / Biotype gravis)).